Here is a 106-residue protein sequence, read N- to C-terminus: Nucleoid-associated protein BBta_7345 (106 aa).

It belongs to the YbaB/EbfC family. In terms of assembly, homodimer.

The protein localises to the cytoplasm. It is found in the nucleoid. Binds to DNA and alters its conformation. May be involved in regulation of gene expression, nucleoid organization and DNA protection. This is Nucleoid-associated protein BBta_7345 from Bradyrhizobium sp. (strain BTAi1 / ATCC BAA-1182).